A 537-amino-acid chain; its full sequence is DNA-directed primase/polymerase protein (537 aa).

A coiled-coil region spans residues 1 to 22 (MLRKWEARVKQIEERASHYERK). Substrate is bound by residues Arg-76, 114 to 116 (DLE), 165 to 169 (KFSRH), 270 to 273 (RNFR), and Lys-279. 2 residues coordinate Mn(2+): Asp-114 and Glu-116. The Zn(2+) site is built by Cys-401, His-408, Cys-428, and Cys-433. Residues 401 to 434 (CENIGRAHKSNNIMILVDLKNEVWYQKCHDPVCK) carry the Zinc knuckle motif motif. The interval 462-481 (SGETDDTSTSLTKDSQTPPS) is disordered. The interval 462-536 (SGETDDTSTS…DELIIEALQN (75 aa)) is interaction with RPA1. Residues 468-478 (TSTSLTKDSQT) show a composition bias toward low complexity. 2 short sequence motifs (RPA1-binding motif) span residues 494–507 (WDDE…EATE) and 524–532 (DIPDELIIE).

It belongs to the eukaryotic-type primase small subunit family. Interacts with RPA1; leading to recruitment to chromatin and stimulate DNA primase activity. Interacts with SSBP1. Interacts with POLDIP2; leading to enhance DNA polymerase activity. The cofactor is Mn(2+).

It localises to the nucleus. Its subcellular location is the mitochondrion matrix. The protein localises to the chromosome. It carries out the reaction ssDNA + n NTP = ssDNA/pppN(pN)n-1 hybrid + (n-1) diphosphate.. The catalysed reaction is DNA(n) + a 2'-deoxyribonucleoside 5'-triphosphate = DNA(n+1) + diphosphate. In terms of biological role, DNA primase and DNA polymerase required to tolerate replication-stalling lesions by bypassing them. Required to facilitate mitochondrial and nuclear replication fork progression by initiating de novo DNA synthesis using dNTPs and acting as an error-prone DNA polymerase able to bypass certain DNA lesions. Shows a high capacity to tolerate DNA damage lesions such as 8oxoG and abasic sites in DNA. Provides different translesion synthesis alternatives when DNA replication is stalled: able to synthesize DNA primers downstream of lesions, such as ultraviolet (UV) lesions, R-loops and G-quadruplexes, to allow DNA replication to continue. Can also realign primers ahead of 'unreadable lesions' such as abasic sites and 6-4 photoproduct (6-4 pyrimidine-pyrimidinone), thereby skipping the lesion. Repriming avoids fork degradation while leading to accumulation of internal ssDNA gaps behind the forks. Also able to incorporate nucleotides opposite DNA lesions such as 8oxoG, like a regular translesion synthesis DNA polymerase. Also required for reinitiating stalled forks after UV damage during nuclear DNA replication. Required for mitochondrial DNA (mtDNA) synthesis and replication, by reinitiating synthesis after UV damage or in the presence of chain-terminating nucleotides. Prevents APOBEC family-mediated DNA mutagenesis by repriming downstream of abasic site to prohibit error-prone translesion synthesis. Has non-overlapping function with POLH. In addition to its role in DNA damage response, also required to maintain efficient nuclear and mitochondrial DNA replication in unperturbed cells. The protein is DNA-directed primase/polymerase protein of Mus musculus (Mouse).